The following is a 529-amino-acid chain: Zinc finger protein 572 (529 aa).

Positions 1–62 are disordered; the sequence is MEQEKKLLVS…EWSKRHRPQH (62 aa). Glycyl lysine isopeptide (Lys-Gly) (interchain with G-Cter in SUMO2) cross-links involve residues lysine 5 and lysine 6. A compositionally biased stretch (polar residues) spans 26-35; it reads TGDTSMNNLE. The segment covering 36-55 has biased composition (basic and acidic residues); sequence TVHHNNSKADKLKEKPSEWS. 12 consecutive C2H2-type zinc fingers follow at residues 132–154, 160–182, 188–210, 216–238, 244–266, 272–294, 300–322, 328–350, 384–406, 412–434, 440–462, and 468–490; these read YKCS…QRTH, YKCS…LRMH, YQCG…ERTH, YKCP…HRSH, YECS…QRTH, YKCP…QRTH, YKCL…QRIH, YQCP…QKMH, YRCC…QRTH, YRCS…QRTH, YKCP…RRTH, and YKCT…RKIH.

The protein belongs to the krueppel C2H2-type zinc-finger protein family.

The protein localises to the nucleus. In terms of biological role, may be involved in transcriptional regulation. The polypeptide is Zinc finger protein 572 (ZNF572) (Homo sapiens (Human)).